Here is a 1140-residue protein sequence, read N- to C-terminus: Rho GTPase-activating protein gacF (1140 aa).

8 disordered regions span residues 1 to 145 (MKTH…KPSR), 189 to 236 (ESDI…IEPI), 455 to 504 (INNN…STSF), 520 to 644 (EVQQ…GLES), 661 to 700 (ESSK…DEDE), 720 to 759 (ETND…NNIS), 773 to 927 (AKVT…STLS), and 952 to 1095 (TSSP…NHTN). Low complexity-rich tracts occupy residues 10 to 26 (LGGL…LKSF) and 35 to 71 (QQQQ…ASSS). Positions 28-55 (TEEVIHEQQQQQQQHNNNNNNNNNHQRQ) form a coiled coil. Polar residues predominate over residues 72-82 (IEETSGYLSKT). Composition is skewed to low complexity over residues 83-136 (SSSS…TSSP) and 193-222 (DNGS…SSSS). In terms of domain architecture, Rho-GAP spans 234 to 409 (EPISQSTEDY…RLIENYHSIF (176 aa)). 2 stretches are compositionally biased toward low complexity: residues 456 to 475 (NNNS…SPYK) and 482 to 493 (PKSSPKLNNRNS). Residues 494–504 (ISPKLSSSTSF) show a composition bias toward polar residues. A coiled-coil region spans residues 517 to 548 (ISDEVQQEQQNQQQQQDEQQDEQQDEQQDEQQ). Over residues 520–533 (EVQQEQQNQQQQQD) the composition is skewed to low complexity. The span at 534–549 (EQQDEQQDEQQDEQQD) shows a compositional bias: acidic residues. Positions 550–566 (EQNSNSTSINTSSSSIT) are enriched in low complexity. Positions 572-596 (STVQYLNRINTCRRPSSWTNNNRIK) are enriched in polar residues. Residues 597–606 (QQQHHHHHHQ) are compositionally biased toward basic residues. Residues 607-631 (QQQQHQQHQQQQSSSSESNSSLTSS) show a composition bias toward low complexity. Composition is skewed to polar residues over residues 632–641 (PQKRLNSVNG) and 672–684 (NRQM…NNIG). Residues 724-759 (DNNNNDQINNSNSSNNIPKTTITTTTNNTTTTNNIS) are compositionally biased toward low complexity. Over residues 773-796 (AKVTPTPTPAPMQTSSFLSTKQTN) the composition is skewed to polar residues. The span at 797-822 (SPSSSSSPSSTVSSTSSSPSSSLSSS) shows a compositional bias: low complexity. Positions 823–854 (IDNKTMSNVNYNRFQPANRTVSSPNVRNFSVP) are enriched in polar residues. Low complexity-rich tracts occupy residues 891–914 (KPKN…NSTP), 952–1058 (TSSP…TSST), and 1065–1079 (HSNS…SSSS).

The protein resides in the cytoplasm. In terms of biological role, rho GTPase-activating protein involved in the signal transduction pathway. This Dictyostelium discoideum (Social amoeba) protein is Rho GTPase-activating protein gacF (gacF).